The primary structure comprises 239 residues: Ribosomal RNA small subunit methyltransferase G (239 aa).

Residues glycine 77, phenylalanine 82, 128-129 (AE), and arginine 147 contribute to the S-adenosyl-L-methionine site. A disordered region spans residues 215-239 (IRKTKSTPKKYPRKPGTPNKSPIEG). The segment covering 216–227 (RKTKSTPKKYPR) has biased composition (basic residues).

The protein belongs to the methyltransferase superfamily. RNA methyltransferase RsmG family.

The protein resides in the cytoplasm. Specifically methylates the N7 position of guanine in position 535 of 16S rRNA. The sequence is that of Ribosomal RNA small subunit methyltransferase G from Bacillus velezensis (strain DSM 23117 / BGSC 10A6 / LMG 26770 / FZB42) (Bacillus amyloliquefaciens subsp. plantarum).